We begin with the raw amino-acid sequence, 185 residues long: Putative manganese efflux pump MntP (185 aa).

Transmembrane regions (helical) follow at residues Leu-4–Leu-24, Ile-43–Ile-63, Ile-67–Ile-87, Leu-107–Ile-127, Val-131–Leu-151, and Gln-165–Leu-185.

The protein belongs to the MntP (TC 9.B.29) family.

The protein localises to the cell membrane. Its function is as follows. Probably functions as a manganese efflux pump. The chain is Putative manganese efflux pump MntP from Methanocorpusculum labreanum (strain ATCC 43576 / DSM 4855 / Z).